A 559-amino-acid chain; its full sequence is Excitatory amino acid transporter 5 (559 aa).

At 1 to 16 (MVLDAVLARGRTVCKH) the chain is on the cytoplasmic side. Transmembrane regions (helical) follow at residues 17 to 37 (NGLL…GFFL), 60 to 80 (MLKM…LASL), and 94 to 114 (AYYL…VSII). Over 115–215 (HPGGAAQKET…EIVYKSEPGT (101 aa)) the chain is Extracellular. N-linked (GlcNAc...) asparagine glycosylation is present at N190. A helical membrane pass occupies residues 216–236 (SDGMNVLGIVIFSATMGIMLG). The N-linked (GlcNAc...) asparagine glycan is linked to N253. The next 6 helical transmembrane spans lie at 259-279 (IVAV…AGKI), 298-318 (TVVC…YFLI), 329-349 (GVLQ…TLPI), 371-391 (VGAT…AIFI), 413-433 (AASI…VIVL), and 456-476 (FRTM…AHIC).

The protein belongs to the dicarboxylate/amino acid:cation symporter (DAACS) (TC 2.A.23) family. SLC1A7 subfamily. As to quaternary structure, interacts with the PDZ domains of DLG4. In terms of tissue distribution, expressed in retina, located in both cone and rod photoreceptor terminals and in axon terminals of rod bipolar cells.

It localises to the photoreceptor inner segment membrane. It is found in the synaptic cell membrane. It carries out the reaction K(+)(in) + L-glutamate(out) + 3 Na(+)(out) + H(+)(out) = K(+)(out) + L-glutamate(in) + 3 Na(+)(in) + H(+)(in). It catalyses the reaction K(+)(in) + L-aspartate(out) + 3 Na(+)(out) + H(+)(out) = K(+)(out) + L-aspartate(in) + 3 Na(+)(in) + H(+)(in). The enzyme catalyses D-aspartate(out) + K(+)(in) + 3 Na(+)(out) + H(+)(out) = D-aspartate(in) + K(+)(out) + 3 Na(+)(in) + H(+)(in). Its function is as follows. Sodium-dependent, high-affinity amino acid transporter that mediates the uptake of L-glutamate and also L-aspartate and D-aspartate. Functions as a symporter that transports one amino acid molecule together with two or three Na(+) ions and one proton, in parallel with the counter-transport of one K(+) ion. Acts primarily as an inhibitory glutamate-gated chloride channel being a major inhibitory presynaptic receptor at mammalian rod bipolar cell axon terminals. Glutamate binding gates a large Cl(-) conductance that mediates inhibition, affecting visual processing in the retina. This is Excitatory amino acid transporter 5 from Mus musculus (Mouse).